The chain runs to 354 residues: Probable glucan endo-1,3-beta-glucosidase BG5 (354 aa).

A signal peptide spans 1-30; that stretch reads MLYLPKKLFLFFFSCIVVIVNYNNSDFVNA. Catalysis depends on glutamate 137, which acts as the Proton donor. Residue glutamate 276 is the Nucleophile of the active site. N-linked (GlcNAc...) asparagine glycosylation occurs at asparagine 286.

The protein belongs to the glycosyl hydrolase 17 family.

Its subcellular location is the secreted. The enzyme catalyses Hydrolysis of (1-&gt;3)-beta-D-glucosidic linkages in (1-&gt;3)-beta-D-glucans.. Functionally, may play a role in plant defense against pathogens. This is Probable glucan endo-1,3-beta-glucosidase BG5 from Arabidopsis thaliana (Mouse-ear cress).